The primary structure comprises 327 residues: Lipoyl synthase (327 aa).

[4Fe-4S] cluster-binding residues include C66, C71, C77, C92, C96, C99, and S306. The region spanning 78-295 (FSKGTATFMI…EKEAYELGFT (218 aa)) is the Radical SAM core domain.

Belongs to the radical SAM superfamily. Lipoyl synthase family. The cofactor is [4Fe-4S] cluster.

The protein localises to the cytoplasm. It catalyses the reaction [[Fe-S] cluster scaffold protein carrying a second [4Fe-4S](2+) cluster] + N(6)-octanoyl-L-lysyl-[protein] + 2 oxidized [2Fe-2S]-[ferredoxin] + 2 S-adenosyl-L-methionine + 4 H(+) = [[Fe-S] cluster scaffold protein] + N(6)-[(R)-dihydrolipoyl]-L-lysyl-[protein] + 4 Fe(3+) + 2 hydrogen sulfide + 2 5'-deoxyadenosine + 2 L-methionine + 2 reduced [2Fe-2S]-[ferredoxin]. The protein operates within protein modification; protein lipoylation via endogenous pathway; protein N(6)-(lipoyl)lysine from octanoyl-[acyl-carrier-protein]: step 2/2. Catalyzes the radical-mediated insertion of two sulfur atoms into the C-6 and C-8 positions of the octanoyl moiety bound to the lipoyl domains of lipoate-dependent enzymes, thereby converting the octanoylated domains into lipoylated derivatives. The polypeptide is Lipoyl synthase (Neisseria gonorrhoeae (strain ATCC 700825 / FA 1090)).